Reading from the N-terminus, the 565-residue chain is uncharacterized protein (565 aa).

This is an uncharacterized protein from Acanthamoeba polyphaga (Amoeba).